We begin with the raw amino-acid sequence, 211 residues long: Large ribosomal subunit protein uL3 (211 aa).

The segment at 135–155 (THGNSLSHRAPGSIGQNQSPG) is disordered. An N5-methylglutamine modification is found at Gln-152.

This sequence belongs to the universal ribosomal protein uL3 family. Part of the 50S ribosomal subunit. Forms a cluster with proteins L14 and L19. Methylated by PrmB.

One of the primary rRNA binding proteins, it binds directly near the 3'-end of the 23S rRNA, where it nucleates assembly of the 50S subunit. This chain is Large ribosomal subunit protein uL3, found in Pseudoalteromonas translucida (strain TAC 125).